The sequence spans 227 residues: MAFLILLRHGKSVWNEKNLFTGWVDIPLSQQGIDEAIHAGQVIKDLPIDCIFTSSLVRSLMTALLAMTHHSSKKIPYIIHDDEQQKLMSRIYSDEEKSMIPLYRSSALNERMYGELQGKNKKETAEEFGEEQVKLWRRSYKISPPGGESLYDTGLRTVPYFQETIFPLLKNSKNVFISAHGNSLRSLIMDIEKLSEEEVLSLELPTGKPIVYLWTGHTFERHPEPLG.

Substrate contacts are provided by residues 8–15, 21–22, Arg58, 110–113, Lys121, 137–138, and 181–182; these read RHGKSVWN, TG, ERMY, RR, and GN. Residue His9 is the Tele-phosphohistidine intermediate of the active site. The active-site Proton donor/acceptor is the Glu110.

This sequence belongs to the phosphoglycerate mutase family. BPG-dependent PGAM subfamily.

The enzyme catalyses (2R)-2-phosphoglycerate = (2R)-3-phosphoglycerate. It functions in the pathway carbohydrate degradation; glycolysis; pyruvate from D-glyceraldehyde 3-phosphate: step 3/5. In terms of biological role, catalyzes the interconversion of 2-phosphoglycerate and 3-phosphoglycerate. The polypeptide is 2,3-bisphosphoglycerate-dependent phosphoglycerate mutase (Chlamydia caviae (strain ATCC VR-813 / DSM 19441 / 03DC25 / GPIC) (Chlamydophila caviae)).